The chain runs to 204 residues: Cytochrome c biogenesis ATP-binding export protein CcmA (204 aa).

Positions 3–204 constitute an ABC transporter domain; sequence LTVTDLAIAR…PLDDPDGDFL (202 aa). 35-42 provides a ligand contact to ATP; the sequence is GPNGAGKT.

Belongs to the ABC transporter superfamily. CcmA exporter (TC 3.A.1.107) family. The complex is composed of two ATP-binding proteins (CcmA) and two transmembrane proteins (CcmB).

The protein resides in the cell membrane. It carries out the reaction heme b(in) + ATP + H2O = heme b(out) + ADP + phosphate + H(+). Its function is as follows. Part of the ABC transporter complex CcmAB involved in the biogenesis of c-type cytochromes; once thought to export heme, this seems not to be the case, but its exact role is uncertain. Responsible for energy coupling to the transport system. The polypeptide is Cytochrome c biogenesis ATP-binding export protein CcmA (Ruegeria pomeroyi (strain ATCC 700808 / DSM 15171 / DSS-3) (Silicibacter pomeroyi)).